Consider the following 148-residue polypeptide: Large ribosomal subunit protein cL37 (148 aa).

A chloroplast-targeting transit peptide spans Met1–Ala65. Ala66 is modified (N-acetylalanine). Residues Leu125–Val148 are disordered.

Belongs to the chloroplast-specific ribosomal protein cL37 family. As to quaternary structure, part of the 50S ribosomal subunit.

It is found in the plastid. It localises to the chloroplast. This is Large ribosomal subunit protein cL37 (PSRP5) from Arabidopsis thaliana (Mouse-ear cress).